A 220-amino-acid chain; its full sequence is 7-cyano-7-deazaguanine synthase 1 (220 aa).

10-20 (FSGGIDSTVLL) is an ATP binding site. Zn(2+)-binding residues include Cys-183, Cys-191, Cys-194, and Cys-197.

The protein belongs to the QueC family. In terms of assembly, homodimer. The cofactor is Zn(2+).

The catalysed reaction is 7-carboxy-7-deazaguanine + NH4(+) + ATP = 7-cyano-7-deazaguanine + ADP + phosphate + H2O + H(+). The protein operates within purine metabolism; 7-cyano-7-deazaguanine biosynthesis. Functionally, catalyzes the ATP-dependent conversion of 7-carboxy-7-deazaguanine (CDG) to 7-cyano-7-deazaguanine (preQ(0)). This Desulfitobacterium hafniense (strain Y51) protein is 7-cyano-7-deazaguanine synthase 1.